Here is a 1001-residue protein sequence, read N- to C-terminus: UPF0182 protein Mjls_1469 (1001 aa).

7 consecutive transmembrane segments (helical) span residues 16-36 (VLIG…RFID), 61-81 (VVVF…GLAL), 112-132 (LFGF…AQSY), 174-194 (FVAT…FGGI), 209-229 (IQLV…YWLD), 258-278 (KLIL…AIVL), and 286-306 (IGVV…PLVV). Over residues 900 to 929 (ATGPAPANLPDGQPAAQPPNGQQPAAQTPG) the composition is skewed to low complexity. A disordered region spans residues 900-977 (ATGPAPANLP…MSGLQDAQRS (78 aa)).

Belongs to the UPF0182 family.

It is found in the cell membrane. The sequence is that of UPF0182 protein Mjls_1469 from Mycobacterium sp. (strain JLS).